The primary structure comprises 124 residues: Small ribosomal subunit protein uS12 (124 aa).

Asp-89 carries the 3-methylthioaspartic acid modification.

This sequence belongs to the universal ribosomal protein uS12 family. Part of the 30S ribosomal subunit. Contacts proteins S8 and S17. May interact with IF1 in the 30S initiation complex.

Its function is as follows. With S4 and S5 plays an important role in translational accuracy. Functionally, interacts with and stabilizes bases of the 16S rRNA that are involved in tRNA selection in the A site and with the mRNA backbone. Located at the interface of the 30S and 50S subunits, it traverses the body of the 30S subunit contacting proteins on the other side and probably holding the rRNA structure together. The combined cluster of proteins S8, S12 and S17 appears to hold together the shoulder and platform of the 30S subunit. This chain is Small ribosomal subunit protein uS12, found in Nitratiruptor sp. (strain SB155-2).